A 305-amino-acid chain; its full sequence is Glycine--tRNA ligase alpha subunit (305 aa).

It belongs to the class-II aminoacyl-tRNA synthetase family. Tetramer of two alpha and two beta subunits.

The protein resides in the cytoplasm. The catalysed reaction is tRNA(Gly) + glycine + ATP = glycyl-tRNA(Gly) + AMP + diphosphate. This chain is Glycine--tRNA ligase alpha subunit, found in Janthinobacterium sp. (strain Marseille) (Minibacterium massiliensis).